Here is a 58-residue protein sequence, read N- to C-terminus: Large ribosomal subunit protein uL30 (58 aa).

It belongs to the universal ribosomal protein uL30 family. In terms of assembly, part of the 50S ribosomal subunit.

The protein is Large ribosomal subunit protein uL30 of Pseudomonas savastanoi pv. phaseolicola (strain 1448A / Race 6) (Pseudomonas syringae pv. phaseolicola (strain 1448A / Race 6)).